A 309-amino-acid chain; its full sequence is tRNA-dihydrouridine(16) synthase (309 aa).

Residues 7–9 (PME) and Q68 each bind FMN. C98 acts as the Proton donor in catalysis. FMN contacts are provided by residues R137, N198, and 220–221 (GC).

It belongs to the Dus family. DusC subfamily. Requires FMN as cofactor.

It catalyses the reaction 5,6-dihydrouridine(16) in tRNA + NADP(+) = uridine(16) in tRNA + NADPH + H(+). The catalysed reaction is 5,6-dihydrouridine(16) in tRNA + NAD(+) = uridine(16) in tRNA + NADH + H(+). Its function is as follows. Catalyzes the synthesis of 5,6-dihydrouridine (D), a modified base found in the D-loop of most tRNAs, via the reduction of the C5-C6 double bond in target uridines. Specifically modifies U16 in tRNAs. In Azotobacter vinelandii, this protein is tRNA-dihydrouridine(16) synthase.